The chain runs to 1021 residues: Ankyrin repeat- and BTB/POZ domain-containing protein 3-A (1021 aa).

The helical transmembrane segment at 160-180 (MVLSWTISVNCITAALSALSL) threads the bilayer. ANK repeat units follow at residues 515–544 (QGMTPLMYSCVRGDEAMVQMLLDAGADINS), 561–590 (RQGTPLTFAVLHGHVPVVQLLLDARANVEG), 599–628 (YTETPLQLASAAGNFELVSLLLERGADPLI), and 642–671 (GEMNSYSLAAAHGHRNVFRKLLSQVEKDKG). One can recognise a BTB domain in the interval 836–902 (SDVTFLVEGK…LYCGGTESLH (67 aa)).

It localises to the membrane. This is Ankyrin repeat- and BTB/POZ domain-containing protein 3-A (abtb3a) from Danio rerio (Zebrafish).